A 418-amino-acid chain; its full sequence is MGQTLAEKILSHKVGRPVRAGELVVVEVDQVMVVDSIAGSFFKRLEYLEATPRYPERVSIVIDHVAPAANLEVAKAQKEIREWGKRHGIRVFDVGRGVCHQVLIEEGLAQPGWVVVGSDSHSTTYGAVGAFGTGMGATDIALAAASGRTWLRVPESVKVVFRGRLPKGVTAKDAALEMVRLLTAEGATYMAVEIHLLDGAEALTRGERMTLANLTVEAGAKAGLVVPSGEILEMYRVPDWLYPDPDARYAKEVEIDLSALTPRVSVPFYVDNVHEVAQVKGKRVDQVFIGTCTNGRIEDLRAAAEVLRGRKVAPWVRLLVVPASSQVLEEAARDGTLLTLLEAGATIGTPGCGPCMGRHMGVLAPGEVCVSTSNRNFRGRMGAPDAEIYLASPRVAAASAVAGYLTTPEELEEEEVHA.

[4Fe-4S] cluster contacts are provided by cysteine 292, cysteine 352, and cysteine 355.

This sequence belongs to the aconitase/IPM isomerase family. In terms of assembly, heterodimer of HacA and HacB. [4Fe-4S] cluster is required as a cofactor.

The enzyme catalyses (2R,3S)-homoisocitrate = cis-homoaconitate + H2O. It participates in amino-acid biosynthesis; L-lysine biosynthesis via AAA pathway; L-alpha-aminoadipate from 2-oxoglutarate: step 3/5. Its activity is regulated as follows. Is not inhibited by lysine. Its function is as follows. Catalyzes the reversible hydration of cis-homoaconitate ((Z)-but-1-ene-1,2,4-tricarboxylate) to homoisocitrate ((1R,2S)-1-hydroxybutane-1,2,4-tricarboxylate). Can catalyze neither the dehydration of (R)-homocitrate ((2R)-2-hydroxybutane-1,2,4-tricarboxylate) into cis-homoaconitate in vitro, nor the reverse reaction. Is not active toward (S)-homocitrate, cis-aconitate or citrate as substrate. The protein is Homoaconitase large subunit (hacA) of Thermus thermophilus (strain ATCC BAA-163 / DSM 7039 / HB27).